The following is a 620-amino-acid chain: MALLQIAEPGQSAAPHQHRLAVGIDLGTTNSLVAAVRSGVTATLPDENGQHSLPSIVRYTQDGIEVGQVAALSSAQDPKNTIVSVKRFMGRSLTDIQSGEQAFPYQFEASENGLPLFVTPQGQVNPVQVSAEILRPLVERAEKTLGGELQGVVITVPAYFDDAQRQGTKDAASLLGVKVLRLLNEPTAAAIAYGLDSKQEGVIAIYDLGGGTFDISILRLNRGVFEVLATGGDSALGGDDFDHLLQAHMQQVWQLANIDSQLSRQLLIEARRVKEALTDASEVEASLTLADGTVLKQLVTKAEFDCLISALVKKTIASCRRTLRDAGVTADEVLETVMVGGSTRVPLVREQVEAFFGKAPLTSIDPDRVVAIGAAIQADILVGNKPESELLLLDVIPLSLGIETMGGLVEKVVSRNTTIPVARAQEFTTFKDGQTAMAFHVVQGERELVDDCRSLARFTLKGIPPLAAGAAHIRVTFQVDADGLLSVTAMEKSTGVQSSIQVKPSFGLSDTEIATMLKDSMKHAKEDISRRMLAEQQVEAARVLESLNAALAKDGDLLTSDERQQIDAVMAQLAEIARGDDADAIKQAIEVLDEHTQDFAAKRMDNSIRVAFKGQSIDNI.

Belongs to the heat shock protein 70 family.

Chaperone involved in the maturation of iron-sulfur cluster-containing proteins. Has a low intrinsic ATPase activity which is markedly stimulated by HscB. The chain is Chaperone protein HscA homolog from Shewanella sp. (strain ANA-3).